The following is a 217-amino-acid chain: ATP phosphoribosyltransferase (217 aa).

Belongs to the ATP phosphoribosyltransferase family. Short subfamily. As to quaternary structure, heteromultimer composed of HisG and HisZ subunits.

It is found in the cytoplasm. It catalyses the reaction 1-(5-phospho-beta-D-ribosyl)-ATP + diphosphate = 5-phospho-alpha-D-ribose 1-diphosphate + ATP. It functions in the pathway amino-acid biosynthesis; L-histidine biosynthesis; L-histidine from 5-phospho-alpha-D-ribose 1-diphosphate: step 1/9. Functionally, catalyzes the condensation of ATP and 5-phosphoribose 1-diphosphate to form N'-(5'-phosphoribosyl)-ATP (PR-ATP). Has a crucial role in the pathway because the rate of histidine biosynthesis seems to be controlled primarily by regulation of HisG enzymatic activity. This is ATP phosphoribosyltransferase from Synechococcus sp. (strain WH7803).